The primary structure comprises 545 residues: Cleavage and polyadenylation specificity factor subunit 6 (545 aa).

A disordered region spans residues 37-69 (ISPSANNGDAPEDRDYLDSLPAPGGNEGSKGAP). Positions 81-161 (IALYIGNLTW…QNPIVTPCNK (81 aa)) constitute an RRM domain. The segment covering 165–180 (SQFEMQSRKSTQSGQM) has biased composition (polar residues). Disordered stretches follow at residues 165–404 (SQFE…PLSE) and 478–545 (YGSV…YRHR). Positions 184–200 (GKAGPPGSGSRGGGFPP) are enriched in gly residues. Pro residues-rich tracts occupy residues 220–230 (PVGPGGPPPHF), 237–265 (PRLPSGPPGPLGPPGPPPPGQGLPPPLGG), 287–363 (PMGP…PPGN), and 372–383 (GPPPGDPYGRPP). Basic and acidic residues-rich tracts occupy residues 384–397 (PYDRDFPGGRDMDA) and 483–497 (GRRERSRERDHSRSR). Positions 498-508 (EKSRRHKSRSR) are enriched in basic residues. Residues 509 to 545 (DRHEDYYRERSRERDRHRERDRDRERDREREREYRHR) show a composition bias toward basic and acidic residues.

Belongs to the RRM CPSF6/7 family. Component of the cleavage factor Im (CFIm) complex.

Its subcellular location is the nucleus. The protein resides in the nucleoplasm. The protein localises to the nucleus speckle. It is found in the cytoplasm. Component of the cleavage factor Im (CFIm) complex that functions as an activator of the pre-mRNA 3'-end cleavage and polyadenylation processing required for the maturation of pre-mRNA into functional mRNAs. CFIm contributes to the recruitment of multiprotein complexes on specific sequences on the pre-mRNA 3'-end, so called cleavage and polyadenylation signals (pA signals). Most pre-mRNAs contain multiple pA signals, resulting in alternative cleavage and polyadenylation (APA) producing mRNAs with variable 3'-end formation. The CFIm complex acts as a key regulator of cleavage and polyadenylation site choice during APA through its binding to 5'-UGUA-3' elements localized in the 3'-untranslated region (UTR) for a huge number of pre-mRNAs. Plays a role in mRNA export. The protein is Cleavage and polyadenylation specificity factor subunit 6 of Danio rerio (Zebrafish).